A 248-amino-acid chain; its full sequence is PACRG-like protein (248 aa).

At M1 the chain carries N-acetylmethionine. The span at 1-29 (MQKSEGSGGTQLKNRATGNYDQRTSSSTQ) shows a compositional bias: polar residues. A disordered region spans residues 1 to 71 (MQKSEGSGGT…LNPKTINPFG (71 aa)). Low complexity predominate over residues 39-49 (SKSSLSTSSPE). Position 47 is a phosphoserine (S47).

The protein is PACRG-like protein (PACRGL) of Homo sapiens (Human).